The following is a 325-amino-acid chain: Diacylglycerol acyltransferase/mycolyltransferase Ag85B (325 aa).

Residues 1–38 form the signal peptide; sequence MTFIDKIRGHWARRMTVAAVAALLLPGLVGVVGGSATA. 82–83 is a substrate binding site; that stretch reads LR. A fibronectin-binding region spans residues 98–108; sequence FEMFLDSGLSV. C127 and C132 form a disulfide bridge. S166 serves as a coordination point for substrate. Residue S166 is the Nucleophile of the active site. E272 is an active-site residue. Substrate contacts are provided by residues 274–277 and 304–306; these read LTIR and HNW. H304 is a catalytic residue.

This sequence belongs to the mycobacterial A85 antigen family.

The protein resides in the secreted. It carries out the reaction 2 alpha,alpha'-trehalose 6-mycolate = alpha,alpha'-trehalose 6,6'-bismycolate + alpha,alpha-trehalose. The catalysed reaction is an acyl-CoA + a 1,2-diacyl-sn-glycerol = a triacyl-sn-glycerol + CoA. Its function is as follows. The antigen 85 proteins (FbpA, FbpB, FbpC) are responsible for the high affinity of mycobacteria for fibronectin, a large adhesive glycoprotein. They also help to maintain the integrity of the cell wall by catalyzing the transfer of mycolic acids to cell wall arabinogalactan and through the synthesis of alpha,alpha-trehalose dimycolate (TDM, cord factor). They catalyze the transfer of a mycoloyl residue from one molecule of alpha,alpha-trehalose monomycolate (TMM) to another TMM, leading to the formation of TDM. This chain is Diacylglycerol acyltransferase/mycolyltransferase Ag85B (fbpB), found in Mycolicibacterium smegmatis (strain ATCC 700084 / mc(2)155) (Mycobacterium smegmatis).